We begin with the raw amino-acid sequence, 271 residues long: Hydroxyethylthiazole kinase (271 aa).

Met46 is a substrate binding site. Positions 122 and 169 each coordinate ATP. Gly196 contacts substrate.

It belongs to the Thz kinase family. Mg(2+) serves as cofactor.

The enzyme catalyses 5-(2-hydroxyethyl)-4-methylthiazole + ATP = 4-methyl-5-(2-phosphooxyethyl)-thiazole + ADP + H(+). The protein operates within cofactor biosynthesis; thiamine diphosphate biosynthesis; 4-methyl-5-(2-phosphoethyl)-thiazole from 5-(2-hydroxyethyl)-4-methylthiazole: step 1/1. Its function is as follows. Catalyzes the phosphorylation of the hydroxyl group of 4-methyl-5-beta-hydroxyethylthiazole (THZ). The sequence is that of Hydroxyethylthiazole kinase from Alkaliphilus oremlandii (strain OhILAs) (Clostridium oremlandii (strain OhILAs)).